Here is a 709-residue protein sequence, read N- to C-terminus: Phosphoribosylformylglycinamidine synthase subunit PurL (709 aa).

Residue His36 is part of the active site. The ATP site is built by Tyr39 and Lys80. Glu82 is a binding site for Mg(2+). Residues Ser83 to His86 and Arg105 each bind substrate. Residue His84 is the Proton acceptor of the active site. A Mg(2+)-binding site is contributed by Asp106. Gln226 serves as a coordination point for substrate. Residue Asp252 coordinates Mg(2+). Position 294–296 (Glu294–Gln296) interacts with substrate. Residues Asp470 and Gly507 each contribute to the ATP site. Ser510 is a substrate binding site.

It belongs to the FGAMS family. As to quaternary structure, monomer. Part of the FGAM synthase complex composed of 1 PurL, 1 PurQ and 2 PurS subunits.

It is found in the cytoplasm. It catalyses the reaction N(2)-formyl-N(1)-(5-phospho-beta-D-ribosyl)glycinamide + L-glutamine + ATP + H2O = 2-formamido-N(1)-(5-O-phospho-beta-D-ribosyl)acetamidine + L-glutamate + ADP + phosphate + H(+). Its pathway is purine metabolism; IMP biosynthesis via de novo pathway; 5-amino-1-(5-phospho-D-ribosyl)imidazole from N(2)-formyl-N(1)-(5-phospho-D-ribosyl)glycinamide: step 1/2. Its function is as follows. Part of the phosphoribosylformylglycinamidine synthase complex involved in the purines biosynthetic pathway. Catalyzes the ATP-dependent conversion of formylglycinamide ribonucleotide (FGAR) and glutamine to yield formylglycinamidine ribonucleotide (FGAM) and glutamate. The FGAM synthase complex is composed of three subunits. PurQ produces an ammonia molecule by converting glutamine to glutamate. PurL transfers the ammonia molecule to FGAR to form FGAM in an ATP-dependent manner. PurS interacts with PurQ and PurL and is thought to assist in the transfer of the ammonia molecule from PurQ to PurL. The protein is Phosphoribosylformylglycinamidine synthase subunit PurL of Saccharolobus islandicus (strain M.14.25 / Kamchatka #1) (Sulfolobus islandicus).